Consider the following 232-residue polypeptide: Lipoprotein-releasing system ATP-binding protein LolD (232 aa).

Residues 11-231 (VYLHDIKRQY…SIEDGVIVEL (221 aa)) enclose the ABC transporter domain. 47–54 (APSGSGKS) lines the ATP pocket.

It belongs to the ABC transporter superfamily. Lipoprotein translocase (TC 3.A.1.125) family. As to quaternary structure, the complex is composed of two ATP-binding proteins (LolD) and two transmembrane proteins (LolC and LolE).

It localises to the cell inner membrane. Its function is as follows. Part of the ABC transporter complex LolCDE involved in the translocation of mature outer membrane-directed lipoproteins, from the inner membrane to the periplasmic chaperone, LolA. Responsible for the formation of the LolA-lipoprotein complex in an ATP-dependent manner. The polypeptide is Lipoprotein-releasing system ATP-binding protein LolD (Rhodopseudomonas palustris (strain BisB5)).